The chain runs to 513 residues: Xylose import ATP-binding protein XylG (513 aa).

2 consecutive ABC transporter domains span residues 5–242 (LEMK…VERE) and 259–505 (LRIE…LRSE). 37 to 44 (GENGSGKS) contacts ATP.

This sequence belongs to the ABC transporter superfamily. Xylose importer (TC 3.A.1.2.4) family. The complex is composed of two ATP-binding proteins (XylG), two transmembrane proteins (XylH) and a solute-binding protein (XylF).

The protein localises to the cell inner membrane. It catalyses the reaction D-xylose(out) + ATP + H2O = D-xylose(in) + ADP + phosphate + H(+). In terms of biological role, part of the ABC transporter complex XylFGH involved in xylose import. Responsible for energy coupling to the transport system. This is Xylose import ATP-binding protein XylG from Shigella flexneri.